Reading from the N-terminus, the 195-residue chain is Obelin (195 aa).

Residues 1–6 constitute a propeptide that is removed on maturation; it reads MASKYA. EF-hand domains follow at residues 17 to 52, 53 to 88, 110 to 145, and 146 to 181; these read KWIK…DICK, NLGA…FPEF, LIRE…SGIS, and PSEE…FWYT. Aspartate 30, asparagine 32, asparagine 34, glutamine 36, and glutamate 41 together coordinate Ca(2+). The Ca(2+) site is built by aspartate 123, aspartate 125, serine 127, threonine 129, glutamate 134, aspartate 159, aspartate 161, serine 163, glutamate 165, and glutamate 170.

It belongs to the aequorin family.

In terms of biological role, ca(2+)-dependent bioluminescence photoprotein. Displays an emission peak at 495 nm (blue light). Trace amounts of calcium ion trigger the intramolecular oxidation of the chromophore, coelenterazine into coelenteramide and CO(2) with the concomitant emission of light. The protein is Obelin of Obelia geniculata (Knotted thread hydroid).